A 146-amino-acid chain; its full sequence is Hemoglobin subunit beta (146 aa).

Val-1 is modified (N-acetylvaline). A Globin domain is found at 2–146 (HLTGEEKSAV…VANALAHKYH (145 aa)). Thr-12 is modified (phosphothreonine). Position 44 is a phosphoserine (Ser-44). Residue Lys-59 is modified to N6-acetyllysine. His-63 contacts heme b. Lys-82 is subject to N6-acetyllysine. Position 92 (His-92) interacts with heme b. The residue at position 93 (Cys-93) is an S-nitrosocysteine. Position 144 is an N6-acetyllysine (Lys-144).

This sequence belongs to the globin family. In terms of assembly, heterotetramer of two alpha chains and two beta chains. As to expression, red blood cells.

Involved in oxygen transport from the lung to the various peripheral tissues. This is Hemoglobin subunit beta (HBB) from Leontocebus fuscicollis (Brown-mantled tamarin).